Reading from the N-terminus, the 175-residue chain is Co-chaperone protein HscB homolog (175 aa).

Positions Ser7 to Leu79 constitute a J domain.

This sequence belongs to the HscB family. Interacts with HscA and stimulates its ATPase activity.

Its function is as follows. Co-chaperone involved in the maturation of iron-sulfur cluster-containing proteins. Seems to help targeting proteins to be folded toward HscA. In Burkholderia thailandensis (strain ATCC 700388 / DSM 13276 / CCUG 48851 / CIP 106301 / E264), this protein is Co-chaperone protein HscB homolog.